Here is a 282-residue protein sequence, read N- to C-terminus: NADPH-dependent 7-cyano-7-deazaguanine reductase (282 aa).

88–90 contacts substrate; that stretch reads IES. 90–91 is an NADPH binding site; the sequence is SK. The active-site Thioimide intermediate is the Cys-190. Residue Asp-197 is the Proton donor of the active site. Residue 229–230 participates in substrate binding; the sequence is HE. Residue 258 to 259 coordinates NADPH; that stretch reads RG.

This sequence belongs to the GTP cyclohydrolase I family. QueF type 2 subfamily. As to quaternary structure, homodimer.

It localises to the cytoplasm. The catalysed reaction is 7-aminomethyl-7-carbaguanine + 2 NADP(+) = 7-cyano-7-deazaguanine + 2 NADPH + 3 H(+). It functions in the pathway tRNA modification; tRNA-queuosine biosynthesis. Its function is as follows. Catalyzes the NADPH-dependent reduction of 7-cyano-7-deazaguanine (preQ0) to 7-aminomethyl-7-deazaguanine (preQ1). This Escherichia coli O127:H6 (strain E2348/69 / EPEC) protein is NADPH-dependent 7-cyano-7-deazaguanine reductase.